The sequence spans 398 residues: Homeobox protein knotted-1-like 1 (398 aa).

Disordered regions lie at residues 20-61 (SPIS…HHHQ), 78-102 (NCFR…ASSS), and 241-273 (LNNP…EIDP). Over residues 23–56 (SSSNKNDNTSDTNNNNNNNNSSNYGPGYNNTNNN) the composition is skewed to low complexity. Over residues 87-102 (PNNNNNPSVKSEASSS) the composition is skewed to polar residues. The 21-residue stretch at 279–299 (ELKNHLLKKYSGYLSSLKQEL) folds into the ELK domain. Positions 300 to 363 (SKKKKKGKLP…NQRKRHWKPS (64 aa)) form a DNA-binding region, homeobox; TALE-type.

It belongs to the TALE/KNOX homeobox family. As to quaternary structure, may form heterodimeric complex with the TALE/BELL proteins BEL1, BLH2, BLH8/PNF and BLH9/PNY. Interacts with OFP1, OFP2, OFP4, OFP6 and OFP12. Interacts with CCT7 and CCT8. Interacts with KNATM-B. Binds to AGO10/PNH. Interacts with BZIP30. In terms of tissue distribution, expressed in the vegetative meristem. Present in the base of flower primordia.

It is found in the nucleus. Functionally, may play a role in meristem function, and may be involved in maintaining cells in an undifferentiated, meristematic state, and its expression disappears at the same time the shoot apex undergoes the transition from vegetative to reproductive development. Positive regulator of LATERAL ORGAN BOUNDARIES (LOB). Probably binds to the DNA sequence 5'-TGAC-3'. Able to traffic from the L1 to the L2/L3 layers of the meristem, presumably through plasmodesmata. In Arabidopsis thaliana (Mouse-ear cress), this protein is Homeobox protein knotted-1-like 1 (KNAT1).